A 310-amino-acid chain; its full sequence is L-lactate dehydrogenase (310 aa).

NAD(+) contacts are provided by residues Val11, Asp32, Tyr62, and 76 to 77; that span reads GV. Substrate contacts are provided by residues Gln79, Arg85, and 117 to 120; that span reads NPVD. Residues 115-117 and Ser140 each bind NAD(+); that span reads ASN. 145–148 contributes to the substrate binding site; that stretch reads DTAR. The beta-D-fructose 1,6-bisphosphate site is built by Arg150 and His165. His172 serves as the catalytic Proton acceptor. Position 227 (Thr227) interacts with substrate.

This sequence belongs to the LDH/MDH superfamily. LDH family. In terms of assembly, homotetramer.

It is found in the cytoplasm. The enzyme catalyses (S)-lactate + NAD(+) = pyruvate + NADH + H(+). The protein operates within fermentation; pyruvate fermentation to lactate; (S)-lactate from pyruvate: step 1/1. Allosterically activated by fructose 1,6-bisphosphate (FBP). In terms of biological role, catalyzes the conversion of lactate to pyruvate. This Allorhizobium ampelinum (strain ATCC BAA-846 / DSM 112012 / S4) (Agrobacterium vitis (strain S4)) protein is L-lactate dehydrogenase.